The sequence spans 340 residues: Dihydroorotate dehydrogenase (quinone) (340 aa).

FMN contacts are provided by residues 65–69 and T89; that span reads AGADK. K69 contributes to the substrate binding site. Residue 114 to 118 coordinates substrate; sequence NRNGF. Positions 142 and 175 each coordinate FMN. N175 contributes to the substrate binding site. The Nucleophile role is filled by S178. N180 is a binding site for substrate. Positions 220 and 248 each coordinate FMN. Substrate is bound at residue 249 to 250; that stretch reads NT. FMN contacts are provided by residues G271, G300, and 321-322; that span reads YS.

The protein belongs to the dihydroorotate dehydrogenase family. Type 2 subfamily. As to quaternary structure, monomer. FMN is required as a cofactor.

Its subcellular location is the cell membrane. The enzyme catalyses (S)-dihydroorotate + a quinone = orotate + a quinol. Its pathway is pyrimidine metabolism; UMP biosynthesis via de novo pathway; orotate from (S)-dihydroorotate (quinone route): step 1/1. In terms of biological role, catalyzes the conversion of dihydroorotate to orotate with quinone as electron acceptor. This Actinobacillus succinogenes (strain ATCC 55618 / DSM 22257 / CCUG 43843 / 130Z) protein is Dihydroorotate dehydrogenase (quinone).